Consider the following 166-residue polypeptide: Large ribosomal subunit protein uL10 (166 aa).

Belongs to the universal ribosomal protein uL10 family. Part of the ribosomal stalk of the 50S ribosomal subunit. The N-terminus interacts with L11 and the large rRNA to form the base of the stalk. The C-terminus forms an elongated spine to which L12 dimers bind in a sequential fashion forming a multimeric L10(L12)X complex.

Its function is as follows. Forms part of the ribosomal stalk, playing a central role in the interaction of the ribosome with GTP-bound translation factors. This Pseudomonas syringae pv. syringae (strain B728a) protein is Large ribosomal subunit protein uL10.